A 404-amino-acid chain; its full sequence is Cysteine desulfurase IscS (404 aa).

Pyridoxal 5'-phosphate is bound by residues 75-76, Asn-155, Gln-183, and 203-205; these read AT and SAH. Lys-206 carries the N6-(pyridoxal phosphate)lysine modification. Thr-243 is a binding site for pyridoxal 5'-phosphate. Catalysis depends on Cys-328, which acts as the Cysteine persulfide intermediate. [2Fe-2S] cluster is bound at residue Cys-328.

It belongs to the class-V pyridoxal-phosphate-dependent aminotransferase family. NifS/IscS subfamily. Homodimer. Forms a heterotetramer with IscU, interacts with other sulfur acceptors. Pyridoxal 5'-phosphate is required as a cofactor.

Its subcellular location is the cytoplasm. It carries out the reaction (sulfur carrier)-H + L-cysteine = (sulfur carrier)-SH + L-alanine. The protein operates within cofactor biosynthesis; iron-sulfur cluster biosynthesis. Its function is as follows. Master enzyme that delivers sulfur to a number of partners involved in Fe-S cluster assembly, tRNA modification or cofactor biosynthesis. Catalyzes the removal of elemental sulfur atoms from cysteine to produce alanine. Functions as a sulfur delivery protein for Fe-S cluster synthesis onto IscU, an Fe-S scaffold assembly protein, as well as other S acceptor proteins. This chain is Cysteine desulfurase IscS, found in Neisseria gonorrhoeae (strain ATCC 700825 / FA 1090).